A 312-amino-acid chain; its full sequence is Pantothenate kinase (312 aa).

ATP is bound at residue Gly97 to Ser104.

It belongs to the prokaryotic pantothenate kinase family.

The protein resides in the cytoplasm. The enzyme catalyses (R)-pantothenate + ATP = (R)-4'-phosphopantothenate + ADP + H(+). It participates in cofactor biosynthesis; coenzyme A biosynthesis; CoA from (R)-pantothenate: step 1/5. The sequence is that of Pantothenate kinase from Mycolicibacterium paratuberculosis (strain ATCC BAA-968 / K-10) (Mycobacterium paratuberculosis).